The chain runs to 628 residues: Probable potassium transport system protein Kup (628 aa).

11 helical membrane-spanning segments follow: residues 56–76 (ILSL…VLLI), 109–129 (LILG…TPAI), 141–161 (AAPG…TLLF), 174–194 (FFGP…VVHI), 209–229 (ALAF…AVVL), 253–273 (WFSL…AMLL), 295–315 (LIVL…TAAF), 343–363 (IYVP…VVTF), 372–392 (AYGI…FFVI), 400–420 (WALC…FFAA), and 425–445 (ILDG…LMMT).

It belongs to the HAK/KUP transporter (TC 2.A.72) family.

It is found in the cell inner membrane. It catalyses the reaction K(+)(in) + H(+)(in) = K(+)(out) + H(+)(out). In terms of biological role, transport of potassium into the cell. Likely operates as a K(+):H(+) symporter. The protein is Probable potassium transport system protein Kup of Methylibium petroleiphilum (strain ATCC BAA-1232 / LMG 22953 / PM1).